Consider the following 729-residue polypeptide: Leucine-rich repeat flightless-interacting protein 1 (729 aa).

Threonine 2 is subject to N-acetylthreonine. Position 16 is a phosphoserine (serine 16). Residues 40–65 are compositionally biased toward basic and acidic residues; that stretch reads IRMKELERQQKEVEERPDKDFAEKGS. The interval 40 to 98 is disordered; that stretch reads IRMKELERQQKEVEERPDKDFAEKGSRNMPSLSAATLASLGGTSSRRGSGDTSISMDTE. Residues 78–94 are compositionally biased toward low complexity; the sequence is SLGGTSSRRGSGDTSIS. 6 positions are modified to phosphoserine: serine 83, serine 84, serine 88, aspartate 90, serine 92, and threonine 97. The stretch at 94-194 forms a coiled coil; the sequence is SMDTEASIRE…LRQREEMLEK (101 aa). A Glycyl lysine isopeptide (Lys-Gly) (interchain with G-Cter in SUMO1) cross-link involves residue lysine 249. A disordered region spans residues 253–729; it reads VEKVGQRETL…SKSKEDCTMS (477 aa). Over residues 260–272 the composition is skewed to polar residues; the sequence is ETLQNSEQEQPKP. Over residues 277–297 the composition is skewed to basic and acidic residues; that stretch reads DCVDRGVSHPGEKAENQRPAE. Serine 302 is modified (phosphoserine). Residues 313–326 are compositionally biased toward polar residues; sequence QQVQSQDQENTSDL. Residues 327–343 are compositionally biased toward basic and acidic residues; sequence KNSEQIESHKVTNKSDS. Positions 344–354 are enriched in polar residues; the sequence is RASNSPEQSSC. Serine 346 and serine 348 each carry phosphoserine. Composition is skewed to basic and acidic residues over residues 435-445 and 482-494; these read KGTENHGESCL and KADD…EKPI. The interval 465-567 is DNA-binding; the sequence is EEAIVQIPQA…KNKKKKAATP (103 aa). Residues 506–523 are compositionally biased toward polar residues; the sequence is INQSGHQDTTGPGSTDAQ. 2 positions are modified to phosphoserine: serine 538 and serine 547. Over residues 550–564 the composition is skewed to basic residues; it reads KKTKNKKKKNKKKKA. Positions 608-618 are enriched in basic and acidic residues; it reads QKIRAGSREPV. Serine 614 and serine 670 each carry phosphoserine. Polar residues-rich tracts occupy residues 667 to 684 and 693 to 710; these read CDTS…SQHG and LDNS…SESG. Basic and acidic residues predominate over residues 713-729; the sequence is AREEVGNSKSKEDCTMS.

Belongs to the LRRFIP family. In terms of assembly, homodimer. May also form higher oligomers. Interacts with FLII. Interacts with MYD88. Competes with FLII for MyD88-binding, even in the absence of LPS. As to expression, ubiquitously expressed.

The protein resides in the nucleus. Its subcellular location is the cytoplasm. Functionally, transcriptional repressor which preferentially binds to the GC-rich consensus sequence (5'-AGCCCCCGGCG-3') and may regulate expression of TNF, EGFR and PDGFA. May control smooth muscle cells proliferation following artery injury through PDGFA repression. May also bind double-stranded RNA. Positively regulates Toll-like receptor (TLR) signaling in response to agonist probably by competing with the negative FLII regulator for MYD88-binding. The polypeptide is Leucine-rich repeat flightless-interacting protein 1 (Lrrfip1) (Mus musculus (Mouse)).